Reading from the N-terminus, the 332-residue chain is Ferredoxin--NADP reductase 2 (332 aa).

Positions 37, 45, 50, 90, 124, 285, and 326 each coordinate FAD.

Belongs to the ferredoxin--NADP reductase type 2 family. As to quaternary structure, homodimer. Requires FAD as cofactor.

The catalysed reaction is 2 reduced [2Fe-2S]-[ferredoxin] + NADP(+) + H(+) = 2 oxidized [2Fe-2S]-[ferredoxin] + NADPH. The sequence is that of Ferredoxin--NADP reductase 2 (yumC) from Bacillus subtilis (strain 168).